Here is a 226-residue protein sequence, read N- to C-terminus: Thymidylate kinase (226 aa).

20 to 27 provides a ligand contact to ATP; it reads GGEGAGKS.

It belongs to the thymidylate kinase family.

The catalysed reaction is dTMP + ATP = dTDP + ADP. Phosphorylation of dTMP to form dTDP in both de novo and salvage pathways of dTTP synthesis. This chain is Thymidylate kinase, found in Bradyrhizobium sp. (strain BTAi1 / ATCC BAA-1182).